Here is a 266-residue protein sequence, read N- to C-terminus: MQNVNEAPTYIHQFDKDEQIISTQDLSVFYGGSVQKLFNASLQFKKKTITALIGGSGSGKSTFLRCLNRMNDKVARVDGEIWYHGLDINKNNINVYQLRKNIGMVFQKPNPFPKSIRENITYALKANGENDKQKLDQIVEESLRAAALWDEVKDKLDKSALAMSGGQQQRLCIARALALKPEILLLDEPASALDPVSTSKLEDTLKQLRTDYTMIMVTHNMQQASRISDYTAFFHLGHVLEYDTTENIFTNPKGEITEDYIRGSFG.

Residues 21 to 261 form the ABC transporter domain; the sequence is ISTQDLSVFY…PKGEITEDYI (241 aa). 54–61 is a binding site for ATP; that stretch reads GGSGSGKS.

The protein belongs to the ABC transporter superfamily. Phosphate importer (TC 3.A.1.7) family. In terms of assembly, the complex is composed of two ATP-binding proteins (PstB), two transmembrane proteins (PstC and PstA) and a solute-binding protein (PstS).

It is found in the cell membrane. It carries out the reaction phosphate(out) + ATP + H2O = ADP + 2 phosphate(in) + H(+). Part of the ABC transporter complex PstSACB involved in phosphate import. Responsible for energy coupling to the transport system. In Lactobacillus johnsonii (strain CNCM I-12250 / La1 / NCC 533), this protein is Phosphate import ATP-binding protein PstB 1.